The primary structure comprises 208 residues: MARYRGAVERLERRFGVSLALKGERRLSGKSALDKRAYGPGQHGQRRAKTSDYGLQLKEKQKAKMMYGISEKQFRSIFVEANRLDGNTGENLIRLIERRLDNVVYRMGFATTRSSARQLVTHGHVLVDGKRLDIPSYFVRSGQKIEIKEKTKSNSQVVRAMELTAQTGIVPWIDVEKDKKYGIFTRYPEREEVVVPIEERLIVELYSK.

Positions 31–51 are disordered; it reads SALDKRAYGPGQHGQRRAKTS. One can recognise an S4 RNA-binding domain in the interval 98–160; the sequence is RRLDNVVYRM…TKSNSQVVRA (63 aa).

Belongs to the universal ribosomal protein uS4 family. In terms of assembly, part of the 30S ribosomal subunit. Contacts protein S5. The interaction surface between S4 and S5 is involved in control of translational fidelity.

Its function is as follows. One of the primary rRNA binding proteins, it binds directly to 16S rRNA where it nucleates assembly of the body of the 30S subunit. Functionally, with S5 and S12 plays an important role in translational accuracy. The chain is Small ribosomal subunit protein uS4 from Helicobacter pylori (strain ATCC 700392 / 26695) (Campylobacter pylori).